We begin with the raw amino-acid sequence, 966 residues long: Probable transport protein MmpL11 (966 aa).

12 helical membrane passes run 13–33 (WLVF…AMTQ), 188–208 (IILM…IPLA), 214–234 (VVIT…SVFV), 235–255 (TSTV…FILM), 279–299 (GLAV…IYLI), 311–331 (AILA…AVLA), 373–393 (ALAA…MVLG), 527–547 (TQPL…LISI), 557–577 (VLMT…VFQW), 595–615 (VPPL…IFLL), 646–666 (AALI…PLVA), and 668–688 (IGVA…LVLV).

Belongs to the resistance-nodulation-cell division (RND) (TC 2.A.6) family. MmpL subfamily.

It localises to the cell membrane. This chain is Probable transport protein MmpL11 (mmpL11), found in Mycobacterium bovis (strain ATCC BAA-935 / AF2122/97).